We begin with the raw amino-acid sequence, 529 residues long: Bifunctional purine biosynthesis protein PurH (529 aa).

Residues 1-148 (MQQHRPVRRA…KNHKDVAIVV (148 aa)) form the MGS-like domain.

This sequence belongs to the PurH family.

It carries out the reaction (6R)-10-formyltetrahydrofolate + 5-amino-1-(5-phospho-beta-D-ribosyl)imidazole-4-carboxamide = 5-formamido-1-(5-phospho-D-ribosyl)imidazole-4-carboxamide + (6S)-5,6,7,8-tetrahydrofolate. It catalyses the reaction IMP + H2O = 5-formamido-1-(5-phospho-D-ribosyl)imidazole-4-carboxamide. Its pathway is purine metabolism; IMP biosynthesis via de novo pathway; 5-formamido-1-(5-phospho-D-ribosyl)imidazole-4-carboxamide from 5-amino-1-(5-phospho-D-ribosyl)imidazole-4-carboxamide (10-formyl THF route): step 1/1. It functions in the pathway purine metabolism; IMP biosynthesis via de novo pathway; IMP from 5-formamido-1-(5-phospho-D-ribosyl)imidazole-4-carboxamide: step 1/1. The protein is Bifunctional purine biosynthesis protein PurH of Erwinia tasmaniensis (strain DSM 17950 / CFBP 7177 / CIP 109463 / NCPPB 4357 / Et1/99).